The chain runs to 458 residues: ATP synthase subunit beta (458 aa).

Residue Gly-148–Thr-155 coordinates ATP.

Belongs to the ATPase alpha/beta chains family. In terms of assembly, F-type ATPases have 2 components, CF(1) - the catalytic core - and CF(0) - the membrane proton channel. CF(1) has five subunits: alpha(3), beta(3), gamma(1), delta(1), epsilon(1). CF(0) has three main subunits: a(1), b(2) and c(9-12). The alpha and beta chains form an alternating ring which encloses part of the gamma chain. CF(1) is attached to CF(0) by a central stalk formed by the gamma and epsilon chains, while a peripheral stalk is formed by the delta and b chains.

Its subcellular location is the cell inner membrane. The enzyme catalyses ATP + H2O + 4 H(+)(in) = ADP + phosphate + 5 H(+)(out). Produces ATP from ADP in the presence of a proton gradient across the membrane. The catalytic sites are hosted primarily by the beta subunits. The sequence is that of ATP synthase subunit beta from Shewanella loihica (strain ATCC BAA-1088 / PV-4).